We begin with the raw amino-acid sequence, 63 residues long: Antimicrobial peptide 2 (63 aa).

Positions 1-27 (MAKVPIAFLKFVIVLILFIAMSGMIEA) are cleaved as a signal peptide. 3 cysteine pairs are disulfide-bonded: C28–C45, C35–C49, and C44–C60.

This sequence belongs to the AMP family. As to quaternary structure, homodimer. As to expression, seed specific.

The protein resides in the secreted. Possesses antifungal activity and is also active on two tested Gram-positive bacteria but is non-toxic for Gram-negative bacteria and cultured human cells. This Mirabilis jalapa (Garden four-o'clock) protein is Antimicrobial peptide 2 (AMP2).